Reading from the N-terminus, the 155-residue chain is S-ribosylhomocysteine lyase (155 aa).

3 residues coordinate Fe cation: His-54, His-58, and Cys-122.

The protein belongs to the LuxS family. Homodimer. The cofactor is Fe cation.

It carries out the reaction S-(5-deoxy-D-ribos-5-yl)-L-homocysteine = (S)-4,5-dihydroxypentane-2,3-dione + L-homocysteine. In terms of biological role, involved in the synthesis of autoinducer 2 (AI-2) which is secreted by bacteria and is used to communicate both the cell density and the metabolic potential of the environment. The regulation of gene expression in response to changes in cell density is called quorum sensing. Catalyzes the transformation of S-ribosylhomocysteine (RHC) to homocysteine (HC) and 4,5-dihydroxy-2,3-pentadione (DPD). This Deinococcus geothermalis (strain DSM 11300 / CIP 105573 / AG-3a) protein is S-ribosylhomocysteine lyase.